Here is a 230-residue protein sequence, read N- to C-terminus: PKHD-type hydroxylase PD_1553 (230 aa).

The Fe2OG dioxygenase domain occupies 78–182 (RTLPPRFNRY…RIASFFWVQS (105 aa)). Residues His96, Asp98, and His163 each coordinate Fe cation. Arg173 lines the 2-oxoglutarate pocket.

Fe(2+) serves as cofactor. It depends on L-ascorbate as a cofactor.

In Xylella fastidiosa (strain Temecula1 / ATCC 700964), this protein is PKHD-type hydroxylase PD_1553.